The chain runs to 457 residues: Secreted effector kinase SteC (457 aa).

Lys256 provides a ligand contact to ATP.

The protein belongs to the protein kinase superfamily. Autophosphorylated.

The protein resides in the secreted. It is found in the host cytoplasm. Effector proteins function to alter host cell physiology and promote bacterial survival in host tissues. This protein is a kinase, which is required for SPI-2 T3SS-dependent F-actin meshwork formation in infected host cells. This chain is Secreted effector kinase SteC (steC), found in Salmonella typhimurium (strain LT2 / SGSC1412 / ATCC 700720).